Consider the following 148-residue polypeptide: Deoxyuridine 5'-triphosphate nucleotidohydrolase (148 aa).

Residues 67–69 (RSG), Asn-80, 84–86 (LID), and Met-94 each bind substrate.

Belongs to the dUTPase family. Mg(2+) is required as a cofactor.

The catalysed reaction is dUTP + H2O = dUMP + diphosphate + H(+). The protein operates within pyrimidine metabolism; dUMP biosynthesis; dUMP from dCTP (dUTP route): step 2/2. In terms of biological role, this enzyme is involved in nucleotide metabolism: it produces dUMP, the immediate precursor of thymidine nucleotides and it decreases the intracellular concentration of dUTP so that uracil cannot be incorporated into DNA. In Burkholderia thailandensis (strain ATCC 700388 / DSM 13276 / CCUG 48851 / CIP 106301 / E264), this protein is Deoxyuridine 5'-triphosphate nucleotidohydrolase.